The primary structure comprises 162 residues: UPF0460 protein y4vQ (162 aa).

This sequence belongs to the UPF0460 family.

The chain is UPF0460 protein y4vQ from Sinorhizobium fredii (strain NBRC 101917 / NGR234).